Consider the following 210-residue polypeptide: Proline-rich protein 20G (210 aa).

Residues 1 to 11 (MEEPRHSKRPR) show a composition bias toward basic residues. The segment at 1–82 (MEEPRHSKRP…GGSWRAGRGR (82 aa)) is disordered. Positions 69–82 (GQRGGGSWRAGRGR) are enriched in gly residues.

The protein belongs to the PRR20 family.

In Homo sapiens (Human), this protein is Proline-rich protein 20G.